The following is a 221-amino-acid chain: Ribonuclease T (221 aa).

Positions 20 to 194 (VVIDVETAGF…YDTERTAELF (175 aa)) constitute an Exonuclease domain. Mg(2+) contacts are provided by aspartate 23, glutamate 25, histidine 181, and aspartate 186. The active-site Proton donor/acceptor is histidine 181.

The protein belongs to the RNase T family. Homodimer. Mg(2+) serves as cofactor.

Functionally, trims short 3' overhangs of a variety of RNA species, leaving a one or two nucleotide 3' overhang. Responsible for the end-turnover of tRNA: specifically removes the terminal AMP residue from uncharged tRNA (tRNA-C-C-A). Also appears to be involved in tRNA biosynthesis. This is Ribonuclease T from Shewanella frigidimarina (strain NCIMB 400).